Here is an 850-residue protein sequence, read N- to C-terminus: Coiled-coil and C2 domain-containing protein 1B (850 aa).

Residues methionine 1–proline 10 show a composition bias toward basic residues. Disordered regions lie at residues methionine 1–lysine 21, leucine 54–leucine 73, and glycine 114–valine 145. Positions glycine 114–serine 129 are enriched in acidic residues. Positions leucine 167–lysine 213 form a coiled coil. Disordered stretches follow at residues glycine 215–aspartate 277 and phenylalanine 436–valine 525. Residues alanine 234–glutamate 244 are compositionally biased toward basic and acidic residues. Over residues proline 440–glycine 450 the composition is skewed to pro residues. Low complexity-rich tracts occupy residues proline 489–leucine 502 and glutamate 511–serine 524. Position 585 is a phosphoserine (serine 585). The residue at position 588 (threonine 588) is a Phosphothreonine. In terms of domain architecture, C2 spans aspartate 668–methionine 807.

In terms of assembly, interacts with CHMP4B. As to expression, expressed in epididymal sperm but not in testicular sperm (at protein level).

Its subcellular location is the nucleus. Transcription factor that binds specifically to the DRE (dual repressor element) and represses HTR1A gene transcription in neuronal cells. This Rattus norvegicus (Rat) protein is Coiled-coil and C2 domain-containing protein 1B (Cc2d1b).